We begin with the raw amino-acid sequence, 87 residues long: uncharacterized protein (87 aa).

The helical transmembrane segment at Leu42–Ala62 threads the bilayer.

The protein belongs to the SPP1 holin family.

It is found in the membrane. This is an uncharacterized protein from Bacillus licheniformis.